A 154-amino-acid polypeptide reads, in one-letter code: Toxin YhaV (154 aa).

As to quaternary structure, homohexamer; forms a complex with PrlF (SohA) with stoichiometry PrlF(2)-YhaV(4), possibly as a YhaV(2)-PrlF(2)-YhaV(2) complex like the MazFE complex. May dimerize in solution.

Toxic component of a type II toxin-antitoxin (TA) system. Has RNase activity in vitro. Acts as a transcription factor. The YhaV/PrlF complex binds the prlF-yhaV operon, probably negatively regulating its expression. The sequence is that of Toxin YhaV (yhaV) from Escherichia coli O157:H7.